A 1376-amino-acid chain; its full sequence is Ubiquitin carboxyl-terminal hydrolase 47 (1376 aa).

Lys-122 carries the post-translational modification N6-acetyllysine. Positions 188–564 constitute a USP domain; the sequence is VGLVNQAMTC…NAYMLIYRLK (377 aa). Catalysis depends on Cys-197, which acts as the Nucleophile. The segment at 426–452 is disordered; sequence EKSPQTESCTDSGAENEGSCHSDQMSN. Positions 430-452 are enriched in polar residues; that stretch reads QTESCTDSGAENEGSCHSDQMSN. The Proton acceptor role is filled by His-503. Ser-832 carries the phosphoserine modification. Disordered stretches follow at residues 835 to 863, 880 to 971, and 985 to 1025; these read SYSKRTAYQKAGGDSGNVDDDCERVKGPA, LKSL…SSDT, and GLDS…ESGK. Residues 882 to 900 show a composition bias toward low complexity; it reads SLSLQQQQQDGDNGDSSKS. 2 positions are modified to phosphoserine: Ser-911 and Ser-934. Residues 930 to 939 are compositionally biased toward polar residues; sequence HIQTSDPENF. Residues 941 to 951 are compositionally biased toward basic and acidic residues; the sequence is SEERSDSDVNN. A compositionally biased stretch (low complexity) spans 954-970; it reads STSSVDSDILSSSHSSD. A compositionally biased stretch (basic and acidic residues) spans 998–1007; sequence KANEGKKETW. The segment covering 1008–1021 has biased composition (acidic residues); the sequence is DTAEEDSGTDSEYD. Phosphoserine is present on Ser-1014. Residue Thr-1016 is modified to Phosphothreonine. The residue at position 1018 (Ser-1018) is a Phosphoserine.

This sequence belongs to the peptidase C19 family. USP47 subfamily. As to quaternary structure, interacts with BTRC and FBXW11. Interacts with POLB.

The protein localises to the cytoplasm. The catalysed reaction is Thiol-dependent hydrolysis of ester, thioester, amide, peptide and isopeptide bonds formed by the C-terminal Gly of ubiquitin (a 76-residue protein attached to proteins as an intracellular targeting signal).. Ubiquitin-specific protease that specifically deubiquitinates monoubiquitinated DNA polymerase beta (POLB), stabilizing POLB thereby playing a role in base-excision repair (BER). Acts as a regulator of cell growth and genome integrity. May also indirectly regulate CDC25A expression at a transcriptional level. In Mus musculus (Mouse), this protein is Ubiquitin carboxyl-terminal hydrolase 47 (Usp47).